Reading from the N-terminus, the 1004-residue chain is MREVILAVHGMTCSACTNTINTQLRALKGVTKCDISLVTNECQVTYDNEVTADSIKEIIEDCGFDCEILRDSEITAISTKEGLLSVQGMTCGSCVSTVTKQVEGIEGVESVVVSLVTEECHVIYEPSKTTLETAREMIEDCGFDSNIIMDGNGNADMTEKTVILKVTKAFEDESPLILSSVSERFQFLLDLGVKSIEISDDMHTLTIKYCCNELGIRDLLRHLERTGYKFTVFSNLDNTTQLRLLSKEDEIRFWKKNSIKSTLLAIICMLLYMIVPMMWPTIVQDRIFPYKETSFVRGLFYRDILGVILASYIQFSVGFYFYKAAWASLKHGSGTMDTLVCVSTTCAYTFSVFSLVHNMFHPSSTGKLPRIVFDTSIMIISYISIGKYLETLAKSQTSTALSKLIQLTPSVCSIISDVERNETKEIPIELLQVNDIVEIKPGMKIPADGIITRGESEIDESLMTGESILVPKKTGFPVIAGSVNGPGHFYFRTTTVGEETKLANIIKVMKEAQLSKAPIQGYADYLASIFVPGILILAVLTFFIWCFILNISANPPVAFTANTKADNFFICLQTATSVVIVACPCALGLATPTAIMVGTGVGAQNGVLIKGGEVLEKFNSITTFVFDKTGTLTTGFMVVKKFLKDSNWVGNVDEDEVLACIKATESISDHPVSKAIIRYCDGLNCNKALNAVVLESEYVLGKGIVSKCQVNGNTYDICIGNEALILEDALKKSGFINSNVDQGNTVSYVSVNGHVFGLFEINDEVKHDSYATVQYLQRNGYETYMITGDNNSAAKRVAREVGISFENVYSDVSPTGKCDLVKKIQDKEGNNKVAVVGDGINDAPALALSDLGIAISTGTEIAIEAADIVILCGNDLNTNSLRGLANAIDISLKTFKRIKLNLFWALCYNIFMIPIAMGVLIPWGITLPPMLAGLAMAFSSVSVVLSSLMLKKWTPPDIESHGISDFKSKFSIGNFWSRLFSTRAIAGEQDIESQAGLMSNEEVL.

The Cytoplasmic portion of the chain corresponds to 1 to 262; the sequence is MREVILAVHG…FWKKNSIKST (262 aa). HMA domains follow at residues 2-67 and 80-146; these read REVI…FDCE and KEGL…FDSN. 4 residues coordinate Cu(+): cysteine 13, cysteine 16, cysteine 91, and cysteine 94. Residues 263–283 form a helical membrane-spanning segment; sequence LLAIICMLLYMIVPMMWPTIV. At 284 to 303 the chain is on the lumenal, vesicle side; sequence QDRIFPYKETSFVRGLFYRD. The helical transmembrane segment at 304–324 threads the bilayer; the sequence is ILGVILASYIQFSVGFYFYKA. The Cytoplasmic portion of the chain corresponds to 325–335; that stretch reads AWASLKHGSGT. A helical transmembrane segment spans residues 336 to 356; sequence MDTLVCVSTTCAYTFSVFSLV. Residues 357 to 370 are Lumenal, vesicle-facing; the sequence is HNMFHPSSTGKLPR. Residues 371-391 form a helical membrane-spanning segment; it reads IVFDTSIMIISYISIGKYLET. Over 392–528 the chain is Cytoplasmic; sequence LAKSQTSTAL…IQGYADYLAS (137 aa). The chain crosses the membrane as a helical span at residues 529 to 549; sequence IFVPGILILAVLTFFIWCFIL. Residues 550 to 577 are Lumenal, vesicle-facing; sequence NISANPPVAFTANTKADNFFICLQTATS. The chain crosses the membrane as a helical span at residues 578-598; that stretch reads VVIVACPCALGLATPTAIMVG. The Cytoplasmic portion of the chain corresponds to 599–901; sequence TGVGAQNGVL…LKTFKRIKLN (303 aa). Aspartate 627 serves as the catalytic 4-aspartylphosphate intermediate. Mg(2+) contacts are provided by aspartate 838 and aspartate 842. The chain crosses the membrane as a helical span at residues 902–924; that stretch reads LFWALCYNIFMIPIAMGVLIPWG. Over 925–927 the chain is Lumenal, vesicle; sequence ITL. Residues 928–950 form a helical membrane-spanning segment; the sequence is PPMLAGLAMAFSSVSVVLSSLML. The Cytoplasmic segment spans residues 951–1004; that stretch reads KKWTPPDIESHGISDFKSKFSIGNFWSRLFSTRAIAGEQDIESQAGLMSNEEVL.

It belongs to the cation transport ATPase (P-type) (TC 3.A.3) family. Type IB subfamily. Interacts with the copper chaperone ATX1 via the copper anion.

It is found in the golgi apparatus. Its subcellular location is the trans-Golgi network membrane. It catalyses the reaction Cu(+)(in) + ATP + H2O = Cu(+)(out) + ADP + phosphate + H(+). Functionally, copper-transporting P-type ATPase necessary for the proper uptake of iron. Required for export of copper from cytosol into extracytosolic compartment. Retrieves copper from the metallochaperone ATX1 and incorporates it into trans-Golgi vesicles where they are acquired by the cell-surface iron transporter FET3. Required the production of inositolphosphorylceramide D, probably by delivering copper to a yet to be identified enzyme. The protein is Copper-transporting ATPase of Saccharomyces cerevisiae (strain ATCC 204508 / S288c) (Baker's yeast).